We begin with the raw amino-acid sequence, 556 residues long: Cholesterol oxidase (556 aa).

Residues Gly-18, Glu-37, Gly-88, Ala-93, and Val-235 each coordinate FAD. His-471 (proton acceptor) is an active-site residue. Gly-504 is an FAD binding site.

This sequence belongs to the GMC oxidoreductase family. FAD serves as cofactor.

The catalysed reaction is cholesterol + O2 = cholest-5-en-3-one + H2O2. The enzyme catalyses cholest-5-en-3-one = cholest-4-en-3-one. It participates in steroid metabolism; cholesterol degradation. Bifunctional enzyme that catalyzes the oxidation and isomerization of cholesterol to cholestenone (cholest-4-en-3-one), an initial step in the cholesterol degradation process. This Acinetobacter baumannii protein is Cholesterol oxidase.